The following is a 160-amino-acid chain: MATLSPEKFSGSPISISKEFPQQKMREIILQMLYALDMAPSAEDSLVPLLMSQTAVSQKHVLVALNQTKSILEKSQELDLIIGNALKNKSFDSLDLVEKNVLRLTLFEHFYSPPINKAILIAEAIRLVKKFSYSEACPFIQAILNDIFTDSSLNENSLSI.

The protein belongs to the NusB family.

In terms of biological role, involved in transcription antitermination. Required for transcription of ribosomal RNA (rRNA) genes. Binds specifically to the boxA antiterminator sequence of the ribosomal RNA (rrn) operons. This chain is Transcription antitermination protein NusB, found in Chlamydia pneumoniae (Chlamydophila pneumoniae).